Consider the following 521-residue polypeptide: Bacillolysin (521 aa).

The signal sequence occupies residues 1-27 (MGLGKKLSVAVAASFMSLTISLPGVQA). The propeptide at 28-221 (AENPQLKENL…ILKKQNKVEH (194 aa)) is activation peptide. Residues glutamine 283 and aspartate 360 each coordinate Ca(2+). Zn(2+) is bound at residue histidine 364. Glutamate 365 is a catalytic residue. The Zn(2+) site is built by histidine 368 and glutamate 388. The Ca(2+) site is built by aspartate 399, aspartate 402, aspartate 404, glutamate 407, and valine 411. Histidine 449 acts as the Proton donor in catalysis.

The protein belongs to the peptidase M4 family. Requires Ca(2+) as cofactor. Zn(2+) is required as a cofactor.

The protein localises to the secreted. The enzyme catalyses Similar, but not identical, to that of thermolysin.. Functionally, extracellular zinc metalloprotease. The polypeptide is Bacillolysin (npr) (Bacillus amyloliquefaciens (Bacillus velezensis)).